The chain runs to 62 residues: Small ribosomal subunit protein eS27 (62 aa).

4 residues coordinate Zn(2+): Cys17, Cys20, Cys36, and Cys39. Residues 17-39 (CPDCENEQLVFEKATSVVECTVC) form a C4-type zinc finger.

The protein belongs to the eukaryotic ribosomal protein eS27 family. As to quaternary structure, part of the 30S ribosomal subunit. Requires Zn(2+) as cofactor.

This chain is Small ribosomal subunit protein eS27, found in Methanocorpusculum labreanum (strain ATCC 43576 / DSM 4855 / Z).